Here is a 317-residue protein sequence, read N- to C-terminus: Apolipoprotein E (317 aa).

An N-terminal signal peptide occupies residues 1 to 18 (MKVLWAALLVTFLAGCQA). A run of 8 repeats spans residues 80 to 101 (ALMD…EQLT), 102 to 123 (PVAE…ARLG), 124 to 145 (ADME…AMLG), 146 to 167 (QSTE…KRLL), 168 to 189 (RDAD…EGAE), 190 to 211 (RGVS…VRAA), 212 to 233 (TVGS…ERLR), and 234 to 255 (ARME…EQVA). The tract at residues 80-255 (ALMDETMKEL…RLDEVKEQVA (176 aa)) is 8 X 22 AA approximate tandem repeats. Methionine sulfoxide is present on Met-143. The residue at position 147 (Ser-147) is a Phosphoserine. The interval 158–168 (HLRKLRKRLLR) is LDL and other lipoprotein receptors binding. Residue 162-165 (LRKR) coordinates heparin. Residues 210–290 (AATVGSVAGK…SWFEPLVEDM (81 aa)) form a lipid-binding and lipoprotein association region. 229 to 236 (GERLRARM) contributes to the heparin binding site. Residues 266–317 (QQIRLQAEAFQARLKSWFEPLVEDMQRQWAGLVEKVQAAVGTSAAPVPSDNH) form a homooligomerization region. The tract at residues 278–290 (RLKSWFEPLVEDM) is specificity for association with VLDL.

This sequence belongs to the apolipoprotein A1/A4/E family. As to quaternary structure, homotetramer. May interact with ABCA1; functionally associated with ABCA1 in the biogenesis of HDLs. May interact with APP/A4 amyloid-beta peptide; the interaction is extremely stable in vitro but its physiological significance is unclear. May interact with MAPT. May interact with MAP2. In the cerebrospinal fluid, interacts with secreted SORL1. Interacts with PMEL; this allows the loading of PMEL luminal fragment on ILVs to induce fibril nucleation. In terms of processing, APOE exists as multiple glycosylated and sialylated glycoforms within cells and in plasma. The extent of glycosylation and sialylation are tissue and context specific. Glycated in plasma VLDL. Post-translationally, phosphorylated by FAM20C in the extracellular medium.

Its subcellular location is the secreted. It localises to the extracellular space. It is found in the extracellular matrix. The protein resides in the extracellular vesicle. The protein localises to the endosome. Its subcellular location is the multivesicular body. Functionally, APOE is an apolipoprotein, a protein associating with lipid particles, that mainly functions in lipoprotein-mediated lipid transport between organs via the plasma and interstitial fluids. APOE is a core component of plasma lipoproteins and is involved in their production, conversion and clearance. Apolipoproteins are amphipathic molecules that interact both with lipids of the lipoprotein particle core and the aqueous environment of the plasma. As such, APOE associates with chylomicrons, chylomicron remnants, very low density lipoproteins (VLDL) and intermediate density lipoproteins (IDL) but shows a preferential binding to high-density lipoproteins (HDL). It also binds a wide range of cellular receptors including the LDL receptor/LDLR, the LDL receptor-related proteins LRP1, LRP2 and LRP8 and the very low-density lipoprotein receptor/VLDLR that mediate the cellular uptake of the APOE-containing lipoprotein particles. Finally, APOE also has a heparin-binding activity and binds heparan-sulfate proteoglycans on the surface of cells, a property that supports the capture and the receptor-mediated uptake of APOE-containing lipoproteins by cells. A main function of APOE is to mediate lipoprotein clearance through the uptake of chylomicrons, VLDLs, and HDLs by hepatocytes. APOE is also involved in the biosynthesis by the liver of VLDLs as well as their uptake by peripheral tissues ensuring the delivery of triglycerides and energy storage in muscle, heart and adipose tissues. By participating in the lipoprotein-mediated distribution of lipids among tissues, APOE plays a critical role in plasma and tissues lipid homeostasis. APOE is also involved in two steps of reverse cholesterol transport, the HDLs-mediated transport of cholesterol from peripheral tissues to the liver, and thereby plays an important role in cholesterol homeostasis. First, it is functionally associated with ABCA1 in the biogenesis of HDLs in tissues. Second, it is enriched in circulating HDLs and mediates their uptake by hepatocytes. APOE also plays an important role in lipid transport in the central nervous system, regulating neuron survival and sprouting. The sequence is that of Apolipoprotein E (APOE) from Pongo pygmaeus (Bornean orangutan).